A 224-amino-acid polypeptide reads, in one-letter code: Probable C-&gt;U-editing enzyme APOBEC-2 (224 aa).

The segment at 1–25 is disordered; the sequence is MAQKEEAAAATEAASQNGEDLENLD. Zn(2+)-binding residues include glutamate 60 and histidine 98. Positions 64 to 169 constitute a CMP/dCMP-type deaminase domain; it reads GRNKTFLCYV…LEIQDALKKL (106 aa). Catalysis depends on glutamate 100, which acts as the Proton donor. Cysteine 128 and cysteine 131 together coordinate Zn(2+).

Belongs to the cytidine and deoxycytidylate deaminase family. In terms of assembly, homotetramer. Zn(2+) serves as cofactor.

It carries out the reaction cytidine(6666) in apoB mRNA + H2O + H(+) = uridine(6666) in apoB mRNA + NH4(+). In terms of biological role, probable C to U editing enzyme whose physiological substrate is not yet known. Does not display detectable apoB mRNA editing. Has a low intrinsic cytidine deaminase activity. May play a role in the epigenetic regulation of gene expression through the process of active DNA demethylation. The polypeptide is Probable C-&gt;U-editing enzyme APOBEC-2 (APOBEC2) (Pongo pygmaeus (Bornean orangutan)).